The following is a 2310-amino-acid chain: MSLYKSLDVAIDYAISQLGEFQFQPIRTQSNPSSLLSACLVRAVHVETRRKVIFKFSQQTFKLENEYFLLRQLSSHPNGRNYAIAPAYILLLNETLGALIYDDPGPNILDEWLGNPNPLDLKLFLKFALGVSYVLCFLHEKKIVHGEIRLDTFHYDLNAPIHAKLLTIGSSVSPIRFTLSSLNWKRLYQVQNICHKLQFFSPEQIGNVGRPLDSRSDIYSLGILFYVILTKQYPWGGQSMRIVQSIHMRQFPSVLPRRPDAFPALDQLIQKMTAKSMNSRISSATDLCYTIVELMQEFSTITSSPLLDQKLLSINKPQQEKLKFPKLLLTNSSDYVRIFHELVAFSSKRDLLTSAKRVDKLPKQHLFKYRPVDNEATYCQVVTVTGEKGSGKSNLLNAVADEARKFGYFAMSSFKGHHFSPYSAIFKCVSLIMQQTLREEKQLVTDYFTSLWEFLGFQLIYMGELFEYVPELNSLLSPKYNLHCKRENYFKLKKRDPQQFRSASGRLGFMVCLLEILSFTSRVRPVIIILDELHLADHPSLSLIIGMISHRLPILLILAWDEPVMFKDFSKCLHEAPYAMVTDIRMNLFDRKNITEFLDSTLESPTQALGPLVLLMQKLSKGNPLVLKSLLLIAFANNGFAFHPKSSSWTYDLPVINRSFEALSSYDIPPLLASLLDALLPARCIEFLLWAALLVEPFPFELLRLITTSMHLFIPKEEILDFPLNVLQFDNDNESCQFSETFFREGILSKISLRRAESMHAQIAKELITGTAKEFYDIRTVHHILKGLGVIKKFDNTKPYILALKESADALMQFGSYEYATELLKSCLFLLPRNFWNSKLYTRKDLISIHISLAMCYWWSKDHENAIKVLKNPKLSSSNVYDYLPAFRLLTKIEYYKYQSLRSIDKAQELLSNLGLKLKEPTDDVLREFYDRLSTKFLECDFLVKQSEPLDRKRIDAISVILSECGFVLFNFSQPYYYYFSFLLAEMYLRYGNPSLRYSVMFLASYCFVTRRKPEFLLRISQVDSDLFVIKDRSAVAHAELIYWGLKRELCSTETGSAVTLESILLQCVMFGDKIYGAYCLACLMAQRVFRGDHIHQLLLDQENSETLLLLWDCEPPFTYYLMLIRNSLLALFGLTNNDDPNNILTTKQRTQKDLHDKLTSKKVPCTFCCWYYAGIIFLNTLFHHYEYVMSIAQEVRKLVDGKLYERYYLITRSFIGVAALQLLFYKKNISEFEREKVEDVAHWAQSSLSEMAKCFHAELYKLWVCLLEGLRQRNLGNYMEALRLFEKVTSMGASVFSPIEFPFVLELIGEFYYGRGHKFLAKSYITRALSCLKNIGCYGVENKLRSRYSDLISDVESRGTTVVSIATTTGDYAEKLKLLRNQDINDFSLGLASYSDIFDKPLVTLPVKKSSAVDESENDFYDRNDEESFDIVSLVSVIKCGQLLSSKLRLGPLLTTVIKLVIEYSQAKHAAIILKDASNYTLAAHGNVEKAESFEPPVILSQSDVKIPDSLLSEVFDHCRIVSLYTVSASQDAELLRWLQEEHDMDFFAIIPLQFKESVIGALYLCLSRRAIRTGNVTFLKLLSQQIAISVSNALLFQSLRRTITDNVTLIELQRLSYQRYKAIEEKCITLLDSLPCIVWTLDSDIGEIEYTNASKRNYFGVPEDCHDSLSWKTFIHPDHHHQFQEKLLNLKTLELGDIELLLRMEDGNYHWHLCRGLSFKEDANAKKWIVVCIDINDEKEAREAAMHAVNLKTNFLANMSHELRTPFSSFYGMLSLLSDTKLNEEQYDIVSTAKQSCTSLVQIIDDLLNFSELKSGKMKLEPDKVFDVEENIADCIELVYPSLSSKPVQISYDIYPNVPALLAGDSAKLRQVITNLLGNSVKFTTEGHILLRCMAIDEEINAEENQCKLRFEIEDTGIGLKEEQLKLLFNPFTQVDGSTTRIYGGSGLGLSICLQICKIMDGDIGVQSVYGEGSTFWFHVQLRNVTSKLSQKHFEESHERFANIRQSLKNAKILVVKSFTTSRSIFRSLFSLAVVDTTTIYSDIEQQLIDSLDKRQPYDFLCIEAASGQTEQIITQILSNQKLNKVLLIVLLPSIQRTKVRSDGDPFITSLNKNQSRIFCFREPIRISKLLQNFPALLSKWSTPTKLVEPSQFRASPRKVDQAVVLSSEEKEILQKKYALIAEDNLIARKLLTKQLSNLGFQVHAAVDGVELVKMYEAKQFGFYSVIFADYHMPIRDGAEAVMDIRAYERENNCSTPIPVIALTADIQKSAKQRCLEVGMNFYLTKPFTQKQLVNAVREFVLLEKSAR.

The Protein kinase domain maps to 12–292 (DYAISQLGEF…SATDLCYTIV (281 aa)). One can recognise a GAF domain in the interval 1450 to 1592 (RLGPLLTTVI…LLSQQIAISV (143 aa)). Positions 1760–1986 (NMSHELRTPF…TFWFHVQLRN (227 aa)) constitute a Histidine kinase domain. Position 1763 is a phosphohistidine; by autocatalysis (His-1763). Positions 2180–2303 (YALIAEDNLI…QLVNAVREFV (124 aa)) constitute a Response regulatory domain. Residue Asp-2232 is modified to 4-aspartylphosphate.

Its subcellular location is the cytoplasm. It catalyses the reaction ATP + protein L-histidine = ADP + protein N-phospho-L-histidine.. Its function is as follows. Involved in the control of the SAPK-dependent transcriptional response to peroxide stress. Regulates sty1 activity. The protein is Peroxide stress-activated histidine kinase mak2 (mak2) of Schizosaccharomyces pombe (strain 972 / ATCC 24843) (Fission yeast).